Reading from the N-terminus, the 321-residue chain is Viral T-cell receptor beta chain-like T17T-22 (321 aa).

Residues 1-28 form the signal peptide; that stretch reads MISWLPSVAMGSRLLCCVALCLLGAGPA. The v segment stretch occupies residues 29–122; the sequence is DSGLTQTPRH…DSALYLCASS (94 aa). A glycan (N-linked (GlcNAc...) asparagine; by host) is linked at Asn105. Positions 123–128 are d segment; it reads PNEDSE. The tract at residues 129–144 is j segment; the sequence is YGETLYFGEGSRLTVV. The segment at 145–321 is c region; that stretch reads EDLKKVSPPK…LMAKVKRKDS (177 aa). 2 N-linked (GlcNAc...) asparagine; by host glycosylation sites follow: Asn214 and Asn264.

The protein is Viral T-cell receptor beta chain-like T17T-22 (V-TCR) of Feline leukemia virus.